The primary structure comprises 704 residues: Matrix metalloproteinase-9 (704 aa).

Positions 1–19 are cleaved as a signal peptide; that stretch reads MSPRQPLVLVFLVLGCCSA. The propeptide at 20-106 is activation peptide; sequence APRPHKPTVV…PRCGVPDLGK (87 aa). An N-linked (GlcNAc...) asparagine glycan is attached at Asn-38. Positions 97-104 match the Cysteine switch motif; it reads PRCGVPDL. Cys-99 provides a ligand contact to Zn(2+). An N-linked (GlcNAc...) asparagine glycan is attached at Asn-127. The Ca(2+) site is built by Asp-131 and Asp-165. Zn(2+) is bound by residues His-175 and Asp-177. Positions 182, 183, 185, and 187 each coordinate Ca(2+). Position 190 (His-190) interacts with Zn(2+). Ca(2+)-binding residues include Gly-197, Gln-199, and Asp-201. His-203 provides a ligand contact to Zn(2+). Ca(2+) contacts are provided by Asp-205, Asp-206, and Glu-208. Fibronectin type-II domains lie at 225-273, 283-331, and 342-390; these read ADGA…FCPS, GDGK…FCPT, and SAGE…FCPD. Intrachain disulfides connect Cys-230–Cys-256, Cys-244–Cys-271, Cys-288–Cys-314, Cys-302–Cys-329, Cys-347–Cys-373, and Cys-361–Cys-388. Residue His-401 participates in Zn(2+) binding. Glu-402 is a catalytic residue. Zn(2+)-binding residues include His-405 and His-411. The tract at residues 434–507 is disordered; it reads DDVRGIQHLY…PSEAPTVPVD (74 aa). Composition is skewed to pro residues over residues 450–461 and 483–496; these read EPQPPTAPPTAP and TGPP…PPTA. Cys-513 and Cys-701 form a disulfide bridge. Hemopexin repeat units follow at residues 515–560, 561–605, 607–654, and 655–701; these read VNIF…WPAL, PRKL…GLGP, VTQV…YPGV, and PLNT…ILQC.

The protein belongs to the peptidase M10A family. Exists as monomer or homodimer; disulfide-linked. Also exists as heterodimer with LCN2. Macrophages and transformed cell lines produce only the monomeric form. Interacts with ECM1. It depends on Zn(2+) as a cofactor. Ca(2+) is required as a cofactor. N- and O-glycosylated.

The protein resides in the secreted. The protein localises to the extracellular space. It is found in the extracellular matrix. The enzyme catalyses Cleavage of gelatin types I and V and collagen types IV and V.. Functionally, matrix metalloproteinase that plays an essential role in local proteolysis of the extracellular matrix and in leukocyte migration. Could play a role in bone osteoclastic resorption. Cleaves KiSS1 at a Gly-|-Leu bond. Cleaves NINJ1 to generate the Secreted ninjurin-1 form. Cleaves type IV and type V collagen into large C-terminal three quarter fragments and shorter N-terminal one quarter fragments. Degrades fibronectin but not laminin or Pz-peptide. The protein is Matrix metalloproteinase-9 (MMP9) of Canis lupus familiaris (Dog).